Consider the following 276-residue polypeptide: Ammonia monooxygenase alpha subunit (276 aa).

A run of 5 helical transmembrane segments spans residues 29 to 49, 66 to 86, 96 to 116, 123 to 143, and 150 to 170; these read VYFPILIILLVGTYHMHFMLL, PVVTPIVGITYCSAIMYYLWV, LCVVCLLIGEWLTRYWGFYWW, FVTPGIMLPGALMLDFTLYLT, and ALVGGGFFGLLFYPGNWPIFG. Cu(+)-binding residues include D187, H191, and H204. A helical membrane pass occupies residues 219–239; it reads VIAAFFSAFVSMLMFTVWWYL.

The soluble ammonia monooxygenase is a nonamer composed of three alpha subunits (AmoA), three beta subunits (AmoB) and three gamma subunits (Cytochrome c1 PetC). Requires Cu(+) as cofactor.

The protein resides in the cell membrane. The protein localises to the cytoplasm. It catalyses the reaction AH2 + NH4(+) + O2 = hydroxylamine + A + H2O + H(+). With respect to regulation, in vitro, inhibited by acetylene. In fact, acetylene is oxidized to ketene which binds irreversibly to His-191 of ammonia monooxygenase alpha subunit (AmoA). Its function is as follows. Part of the ammonia monooxygenase complex, which catalyzes the oxidation of ammonia to hydroxylamine, the first reaction in the process of ammonia oxidation to nitrite. This is Ammonia monooxygenase alpha subunit from Nitrosomonas europaea (strain ATCC 19718 / CIP 103999 / KCTC 2705 / NBRC 14298).